Here is a 366-residue protein sequence, read N- to C-terminus: Ribosomal RNA large subunit methyltransferase M (366 aa).

Residues serine 188, cysteine 221–glycine 224, aspartate 240, aspartate 260, and aspartate 277 each bind S-adenosyl-L-methionine. Lysine 306 acts as the Proton acceptor in catalysis.

It belongs to the class I-like SAM-binding methyltransferase superfamily. RNA methyltransferase RlmE family. RlmM subfamily. As to quaternary structure, monomer.

Its subcellular location is the cytoplasm. It carries out the reaction cytidine(2498) in 23S rRNA + S-adenosyl-L-methionine = 2'-O-methylcytidine(2498) in 23S rRNA + S-adenosyl-L-homocysteine + H(+). Catalyzes the 2'-O-methylation at nucleotide C2498 in 23S rRNA. This is Ribosomal RNA large subunit methyltransferase M from Escherichia fergusonii (strain ATCC 35469 / DSM 13698 / CCUG 18766 / IAM 14443 / JCM 21226 / LMG 7866 / NBRC 102419 / NCTC 12128 / CDC 0568-73).